The chain runs to 228 residues: UPF0758 protein str1465 (228 aa).

In terms of domain architecture, MPN spans 103–225 (QIMSSQQVAR…YYSFREERED (123 aa)). Residues H174, H176, and D187 each contribute to the Zn(2+) site. Positions 174–187 (HNHPSGEAYPSRND) match the JAMM motif motif.

This sequence belongs to the UPF0758 family.

The sequence is that of UPF0758 protein str1465 from Streptococcus thermophilus (strain CNRZ 1066).